Here is a 331-residue protein sequence, read N- to C-terminus: Large ribosomal subunit protein uL3 (331 aa).

It belongs to the universal ribosomal protein uL3 family. In terms of assembly, part of the 50S ribosomal subunit. Forms a cluster with proteins L14 and L24e.

One of the primary rRNA binding proteins, it binds directly near the 3'-end of the 23S rRNA, where it nucleates assembly of the 50S subunit. The chain is Large ribosomal subunit protein uL3 from Thermoplasma volcanium (strain ATCC 51530 / DSM 4299 / JCM 9571 / NBRC 15438 / GSS1).